Reading from the N-terminus, the 375-residue chain is o-succinylbenzoate synthase (375 aa).

Residue K166 is the Proton donor of the active site. 3 residues coordinate Mg(2+): D191, E216, and D241. K265 serves as the catalytic Proton acceptor.

It belongs to the mandelate racemase/muconate lactonizing enzyme family. MenC type 2 subfamily. In terms of assembly, homotetramer. The cofactor is a divalent metal cation.

The catalysed reaction is (1R,6R)-6-hydroxy-2-succinyl-cyclohexa-2,4-diene-1-carboxylate = 2-succinylbenzoate + H2O. It catalyses the reaction N-acetyl-D-methionine = N-acetyl-L-methionine. It carries out the reaction N-acetyl-D-phenylalanine = N-acetyl-L-phenylalanine. The protein operates within quinol/quinone metabolism; 1,4-dihydroxy-2-naphthoate biosynthesis; 1,4-dihydroxy-2-naphthoate from chorismate: step 4/7. Its pathway is quinol/quinone metabolism; menaquinone biosynthesis. In terms of biological role, converts 2-succinyl-6-hydroxy-2,4-cyclohexadiene-1-carboxylate (SHCHC) to 2-succinylbenzoate (OSB). Also acts as a N-succinylamino acid racemase (NSAR) that catalyzes the racemization of various N-succinylamino acids, including N-succinyl-alanine and N-succinyl-phenylalanine. Can catalyze the racemization of a broad range of N-acylamino acids, including N-acetyl-methionine, N-acetyl-phenylalanine, N-carbamoyl-methionine, N-formyl-D-methionine, N-formyl-D-norleucine and N-carbamoyl-D-norleucine. May be a bifunctional enzyme involved in menaquinone biosynthesis and in an irreversible pathway for the conversion of D- to L-amino acids, thereby facilitating the survival and/or growth of the organism. The polypeptide is o-succinylbenzoate synthase (Geobacillus kaustophilus).